The chain runs to 299 residues: Putative syntaxin-2 (299 aa).

Over 1-270 (MRDRLNEFQS…SAMRKKICVA (270 aa)) the chain is Cytoplasmic. The stretch at 112–146 (EKRMRQNQLELLKDNLNKLINLFNETHQDYKSRVS) forms a coiled coil. Residues 193–255 (YEDVKKRHGE…KQGSANVKTA (63 aa)) enclose the t-SNARE coiled-coil homology domain. The helical; Anchor for type IV membrane protein transmembrane segment at 271–291 (AILITILLILIIVAIILAVVL) threads the bilayer. At 292–299 (SRGNNNNK) the chain is on the extracellular side.

The protein belongs to the syntaxin family.

It is found in the membrane. Functionally, potentially involved in docking of synaptic vesicles at presynaptic active zones. The sequence is that of Putative syntaxin-2 (syx-2) from Caenorhabditis elegans.